The primary structure comprises 356 residues: Phosphate acyltransferase (356 aa).

The protein belongs to the PlsX family. In terms of assembly, homodimer. Probably interacts with PlsY.

The protein localises to the cytoplasm. The catalysed reaction is a fatty acyl-[ACP] + phosphate = an acyl phosphate + holo-[ACP]. It functions in the pathway lipid metabolism; phospholipid metabolism. In terms of biological role, catalyzes the reversible formation of acyl-phosphate (acyl-PO(4)) from acyl-[acyl-carrier-protein] (acyl-ACP). This enzyme utilizes acyl-ACP as fatty acyl donor, but not acyl-CoA. This Escherichia coli (strain K12 / DH10B) protein is Phosphate acyltransferase.